The sequence spans 831 residues: Phenylalanine--tRNA ligase beta subunit (831 aa).

The tRNA-binding domain occupies 42–157 (ADISGPIVVG…GFAEPGTKAD (116 aa)). Positions 408 to 483 (VPREPIVVRA…RNEGYENIPA (76 aa)) constitute a B5 domain. Mg(2+) is bound by residues D461, D467, E470, and E471. The FDX-ACB domain maps to 737 to 830 (STYPVATQDV…AAERTGAVLR (94 aa)).

The protein belongs to the phenylalanyl-tRNA synthetase beta subunit family. Type 1 subfamily. As to quaternary structure, tetramer of two alpha and two beta subunits. Requires Mg(2+) as cofactor.

The protein resides in the cytoplasm. It carries out the reaction tRNA(Phe) + L-phenylalanine + ATP = L-phenylalanyl-tRNA(Phe) + AMP + diphosphate + H(+). This is Phenylalanine--tRNA ligase beta subunit from Thermobifida fusca (strain YX).